We begin with the raw amino-acid sequence, 150 residues long: 3-dehydroquinate dehydratase (150 aa).

Y26 functions as the Proton acceptor in the catalytic mechanism. Substrate contacts are provided by N77, H83, and D90. The Proton donor role is filled by H103. Residues 104–105 (LS) and R114 each bind substrate.

The protein belongs to the type-II 3-dehydroquinase family. Homododecamer.

The enzyme catalyses 3-dehydroquinate = 3-dehydroshikimate + H2O. It functions in the pathway metabolic intermediate biosynthesis; chorismate biosynthesis; chorismate from D-erythrose 4-phosphate and phosphoenolpyruvate: step 3/7. Functionally, catalyzes a trans-dehydration via an enolate intermediate. The chain is 3-dehydroquinate dehydratase from Erwinia tasmaniensis (strain DSM 17950 / CFBP 7177 / CIP 109463 / NCPPB 4357 / Et1/99).